The following is a 779-amino-acid chain: Transcription activator of gluconeogenesis BDCG_02812 (779 aa).

The interval 1-70 (MTASTRNGSP…NAKDPLRPRR (70 aa)) is disordered. Polar residues predominate over residues 25–61 (KSMTTTPANPPETKSQTNGKGSGTAQSSQKPASTSAN). The segment at residues 77 to 105 (CFACQRAHLTCGDERPCQRCIKRGLQDAC) is a DNA-binding region (zn(2)-C6 fungal-type). 6 disordered regions span residues 135–163 (QANT…QSVS), 202–239 (SVFH…SVSG), 285–344 (GAGD…ANPR), 401–421 (TNLM…PGLK), 559–590 (GSSL…PHTG), and 655–732 (FHGK…QTWG). Residues 202–226 (SVFHAQSPSSTQNFDLSSNPQTQNL) show a composition bias toward polar residues. Residues 227–238 (SSAMSQTASSVS) show a composition bias toward low complexity. Composition is skewed to polar residues over residues 291-322 (PSDS…NQSP), 333-344 (WNPTGQGQANPR), and 401-416 (TNLM…SRIS). Low complexity predominate over residues 560–572 (SSLSSASSVRGSS). The span at 573 to 586 (TFTPRNNNTHNSID) shows a compositional bias: polar residues. Residues 672-719 (TGTTTSGDVATTTATGTSTSNGANANTNGNNTNPNDPSSAASSSASSA) show a composition bias toward low complexity. Positions 720 to 729 (LQGPQQSPRQ) are enriched in polar residues.

Belongs to the ERT1/acuK family.

It localises to the nucleus. In terms of biological role, transcription factor which regulates nonfermentable carbon utilization. Activator of gluconeogenetic genes. The polypeptide is Transcription activator of gluconeogenesis BDCG_02812 (Ajellomyces dermatitidis (strain ER-3 / ATCC MYA-2586) (Blastomyces dermatitidis)).